The primary structure comprises 420 residues: Glucose-1-phosphate adenylyltransferase (420 aa).

Residues Tyr107, Gly172, 187–188 (EK), and Ser205 each bind alpha-D-glucose 1-phosphate.

It belongs to the bacterial/plant glucose-1-phosphate adenylyltransferase family. As to quaternary structure, homotetramer.

The catalysed reaction is alpha-D-glucose 1-phosphate + ATP + H(+) = ADP-alpha-D-glucose + diphosphate. Its pathway is glycan biosynthesis; glycogen biosynthesis. Its function is as follows. Involved in the biosynthesis of ADP-glucose, a building block required for the elongation reactions to produce glycogen. Catalyzes the reaction between ATP and alpha-D-glucose 1-phosphate (G1P) to produce pyrophosphate and ADP-Glc. The polypeptide is Glucose-1-phosphate adenylyltransferase (Sinorhizobium fredii (strain NBRC 101917 / NGR234)).